Consider the following 286-residue polypeptide: Translocon-associated protein subunit alpha (286 aa).

The N-terminal stretch at 1–21 (MRLLPRLLLLLLLVFPATVLL) is a signal peptide. Topologically, residues 22–207 (RGGPGGSLAE…EREDGLDGQT (186 aa)) are lumenal. Residues 28–83 (SLAEAQDLSEDEETVEDSVIEDEDDEAEVEEDEPTDLAEDREEEDVSGEPEASPSA) are disordered. Residues 34-75 (DLSEDEETVEDSVIEDEDDEAEVEEDEPTDLAEDREEEDVSG) are compositionally biased toward acidic residues. N-linked (GlcNAc...) asparagine glycans are attached at residues N136 and N191. The chain crosses the membrane as a helical span at residues 208–228 (IFMYMSLAGLGLLVVVGLHQL). Residues 229 to 286 (LESRNRKRPIQKVEMGTSSQNDVDMSWIPQETLNQINKASPRRLPRKRPQKRSVGSDE) are Cytoplasmic-facing. S247 is subject to Phosphoserine. T260 carries the post-translational modification Phosphothreonine. The interval 264–286 (INKASPRRLPRKRPQKRSVGSDE) is disordered. S268 bears the Phosphoserine mark. Residues 268 to 279 (SPRRLPRKRPQK) show a composition bias toward basic residues.

The protein belongs to the TRAP-alpha family. As to quaternary structure, heterotetramer of TRAP-alpha, TRAP-beta, TRAP-delta and TRAP-gamma. Interacts with palmitoylated calnexin (CALX), the interaction is required for efficient folding of glycosylated proteins. Phosphorylated in its cytoplasmic tail.

It localises to the endoplasmic reticulum membrane. Functionally, TRAP proteins are part of a complex whose function is to bind calcium to the ER membrane and thereby regulate the retention of ER resident proteins. May be involved in the recycling of the translocation apparatus after completion of the translocation process or may function as a membrane-bound chaperone facilitating folding of translocated proteins. The polypeptide is Translocon-associated protein subunit alpha (SSR1) (Oryctolagus cuniculus (Rabbit)).